A 20-amino-acid chain; its full sequence is MVPYRNPRHQHVASVLRSGG.

Residues 1–11 are compositionally biased toward basic residues; the sequence is MVPYRNPRHQH. The interval 1–20 is disordered; the sequence is MVPYRNPRHQHVASVLRSGG.

Functionally, involved in the transcriptional regulation of pufB. The protein is Transcriptional regulatory protein PufK (pufK) of Cereibacter sphaeroides (strain ATCC 17023 / DSM 158 / JCM 6121 / CCUG 31486 / LMG 2827 / NBRC 12203 / NCIMB 8253 / ATH 2.4.1.) (Rhodobacter sphaeroides).